Reading from the N-terminus, the 216-residue chain is Cytochrome c biogenesis ATP-binding export protein CcmA (216 aa).

One can recognise an ABC transporter domain in the interval 5-216 (ISVDTLLSAS…RKIRLDYRFV (212 aa)). An ATP-binding site is contributed by 43 to 50 (GPNGAGKT).

Belongs to the ABC transporter superfamily. CcmA exporter (TC 3.A.1.107) family. The complex is composed of two ATP-binding proteins (CcmA) and two transmembrane proteins (CcmB).

The protein resides in the cell inner membrane. The enzyme catalyses heme b(in) + ATP + H2O = heme b(out) + ADP + phosphate + H(+). Functionally, part of the ABC transporter complex CcmAB involved in the biogenesis of c-type cytochromes; once thought to export heme, this seems not to be the case, but its exact role is uncertain. Responsible for energy coupling to the transport system. The sequence is that of Cytochrome c biogenesis ATP-binding export protein CcmA from Shewanella oneidensis (strain ATCC 700550 / JCM 31522 / CIP 106686 / LMG 19005 / NCIMB 14063 / MR-1).